The following is a 378-amino-acid chain: Dual-specificity RNA methyltransferase RlmN (378 aa).

Catalysis depends on E97, which acts as the Proton acceptor. The region spanning 103–341 (EGDRATLCVS…VMVRKTRGDD (239 aa)) is the Radical SAM core domain. C110 and C346 are disulfide-bonded. C117, C121, and C124 together coordinate [4Fe-4S] cluster. Residues 171–172 (GE), S203, 225–227 (SLH), and N303 each bind S-adenosyl-L-methionine. C346 serves as the catalytic S-methylcysteine intermediate.

Belongs to the radical SAM superfamily. RlmN family. It depends on [4Fe-4S] cluster as a cofactor.

It is found in the cytoplasm. The catalysed reaction is adenosine(2503) in 23S rRNA + 2 reduced [2Fe-2S]-[ferredoxin] + 2 S-adenosyl-L-methionine = 2-methyladenosine(2503) in 23S rRNA + 5'-deoxyadenosine + L-methionine + 2 oxidized [2Fe-2S]-[ferredoxin] + S-adenosyl-L-homocysteine. The enzyme catalyses adenosine(37) in tRNA + 2 reduced [2Fe-2S]-[ferredoxin] + 2 S-adenosyl-L-methionine = 2-methyladenosine(37) in tRNA + 5'-deoxyadenosine + L-methionine + 2 oxidized [2Fe-2S]-[ferredoxin] + S-adenosyl-L-homocysteine. In terms of biological role, specifically methylates position 2 of adenine 2503 in 23S rRNA and position 2 of adenine 37 in tRNAs. m2A2503 modification seems to play a crucial role in the proofreading step occurring at the peptidyl transferase center and thus would serve to optimize ribosomal fidelity. The chain is Dual-specificity RNA methyltransferase RlmN from Idiomarina loihiensis (strain ATCC BAA-735 / DSM 15497 / L2-TR).